A 539-amino-acid chain; its full sequence is Acid-sensing ion channel 4 (539 aa).

At 1-68 (MPIEIVCKIK…GPGPHGLRRT (68 aa)) the chain is on the cytoplasmic side. The chain crosses the membrane as a helical span at residues 69–89 (LWALALLTSLAAFLYQAAGLA). The Extracellular segment spans residues 90-438 (RGYLTRPHLV…EQRAAYGLSA (349 aa)). 2 disulfide bridges follow: C118/C202 and C180/C187. Residues N191 and N243 are each glycosylated (N-linked (GlcNAc...) asparagine). Disulfide bonds link C296–C375, C318–C371, C322–C369, C331–C353, and C333–C345. Residue N376 is glycosylated (N-linked (GlcNAc...) asparagine). A helical transmembrane segment spans residues 439–459 (LLGDLGGQMGLFIGASILTLL). The GAS motif; ion selectivity filter signature appears at 452 to 454 (GAS). At 460–539 (EILDYIYEVS…PGGLFEDFAC (80 aa)) the chain is on the cytoplasmic side. Residues 501–531 (EQSPCPSRGRVEGGGVSSLLPNHHHPHGPPG) form a disordered region.

Belongs to the amiloride-sensitive sodium channel (TC 1.A.6) family. ASIC4 subfamily. Homotrimer. Heterotrimer; with other ASIC proteins producing functional channels. As to expression, expressed in pituitary gland. Weakly expressed in brain, vestibular system and organ of Corti.

Its subcellular location is the cell membrane. Does not exhibit measurable stand-alone pH-gated sodium channel activity but may form pH-gated heterotrimeric sodium channels. Its activity could also depend on alternative gating mechanisms. The chain is Acid-sensing ion channel 4 from Homo sapiens (Human).